A 185-amino-acid chain; its full sequence is MARRDQLVSFLCFFLIVSAVAGGLCVSATVLPMRVGKQYVVGGRSGWRTPPPASVDLYAKWAAGIRFYVADSIEFVYKNDSVVKVDKFGYYHCNATAAAANDGSVLFLLDAPGFAYFSSADADHCKKGQRLMINVDSAPSPSPSPSPAPQEAATASAATSSSAATAAHALLLAAMAMMGLILGEW.

The signal sequence occupies residues 1–21 (MARRDQLVSFLCFFLIVSAVA). In terms of domain architecture, Phytocyanin spans 37–137 (KQYVVGGRSG…GQRLMINVDS (101 aa)). 2 N-linked (GlcNAc...) asparagine glycosylation sites follow: Asn79 and Asn94. A disulfide bridge links Cys93 with Cys125. Residues 136–155 (DSAPSPSPSPSPAPQEAATA) form a disordered region. Ser156 is lipidated: GPI-anchor amidated serine. Positions 157 to 185 (AATSSSAATAAHALLLAAMAMMGLILGEW) are cleaved as a propeptide — removed in mature form.

The protein belongs to the early nodulin-like (ENODL) family. As to expression, expressed ubiquitously. Accumulates mainly in anthers, stigmas and ovaries.

The protein localises to the cell membrane. Functionally, may act as a carbohydrate transporter. Required for male fertility and seed yield. The chain is Early nodulin-like protein 17 from Oryza sativa subsp. japonica (Rice).